The primary structure comprises 264 residues: uncharacterized protein (264 aa).

The first 22 residues, 1-22 (MKSIKRIGLCISLLILIIFVTS), serve as a signal peptide directing secretion. The N-palmitoyl cysteine moiety is linked to residue Cys23. Cys23 is lipidated: S-diacylglycerol cysteine.

The protein belongs to the staphylococcal tandem lipoprotein family.

The protein localises to the cell membrane. This is an uncharacterized protein from Staphylococcus aureus (strain MRSA252).